We begin with the raw amino-acid sequence, 266 residues long: Glycine--tRNA ligase beta subunit (266 aa).

It belongs to the class-II aminoacyl-tRNA synthetase family. Tetramer of two alpha and two beta subunits.

It is found in the cytoplasm. It carries out the reaction tRNA(Gly) + glycine + ATP = glycyl-tRNA(Gly) + AMP + diphosphate. The chain is Glycine--tRNA ligase beta subunit (glyS) from Moraxella catarrhalis (Branhamella catarrhalis).